Consider the following 158-residue polypeptide: Probable cyclic pyranopterin monophosphate synthase (158 aa).

Substrate-binding positions include 78–80 (MCH) and 114–115 (ME). D129 is an active-site residue.

It belongs to the MoaC family. In terms of assembly, homohexamer; trimer of dimers.

The catalysed reaction is (8S)-3',8-cyclo-7,8-dihydroguanosine 5'-triphosphate = cyclic pyranopterin phosphate + diphosphate. It functions in the pathway cofactor biosynthesis; molybdopterin biosynthesis. In terms of biological role, catalyzes the conversion of (8S)-3',8-cyclo-7,8-dihydroguanosine 5'-triphosphate to cyclic pyranopterin monophosphate (cPMP). This chain is Probable cyclic pyranopterin monophosphate synthase, found in Methanosarcina acetivorans (strain ATCC 35395 / DSM 2834 / JCM 12185 / C2A).